We begin with the raw amino-acid sequence, 176 residues long: Large ribosomal subunit protein eL20 (176 aa).

A Glycyl lysine isopeptide (Lys-Gly) (interchain with G-Cter in SUMO2) cross-link involves residue lysine 11. Tyrosine 63 carries the post-translational modification Phosphotyrosine. Residue serine 71 is modified to Phosphoserine. Lysine 76 is subject to N6-succinyllysine. Serine 123 bears the Phosphoserine mark. Glycyl lysine isopeptide (Lys-Gly) (interchain with G-Cter in SUMO2) cross-links involve residues lysine 128 and lysine 170.

The protein belongs to the eukaryotic ribosomal protein eL20 family. Component of the large ribosomal subunit. Binds IPO9 with high affinity.

The protein localises to the cytoplasm. In terms of biological role, component of the large ribosomal subunit. The ribosome is a large ribonucleoprotein complex responsible for the synthesis of proteins in the cell. This is Large ribosomal subunit protein eL20 (Rpl18a) from Mus musculus (Mouse).